A 44-amino-acid chain; its full sequence is Photosystem I reaction center subunit IX (44 aa).

Residues 7 to 27 (YLSVAPVLTTLWFGSLAGLLI) form a helical membrane-spanning segment.

It belongs to the PsaJ family.

Its subcellular location is the plastid. It is found in the chloroplast thylakoid membrane. In terms of biological role, may help in the organization of the PsaE and PsaF subunits. The sequence is that of Photosystem I reaction center subunit IX from Nymphaea alba (White water-lily).